Here is a 217-residue protein sequence, read N- to C-terminus: Meiotic expression up-regulated protein 29 (217 aa).

An N-terminal signal peptide occupies residues 1 to 21 (MFVVKTAVLLFFALFIGNTYA). Residues 22-133 (YTYSLDRIQA…SGVLLHRPWK (112 aa)) lie on the Extracellular side of the membrane. The N-linked (GlcNAc...) asparagine glycan is linked to asparagine 84. The chain crosses the membrane as a helical span at residues 134 to 154 (LFSLKPFTAAFVLLLAASYLA). Over 155–217 (TACFRMLGYL…VPVPVLDESV (63 aa)) the chain is Cytoplasmic.

Its subcellular location is the membrane. The chain is Meiotic expression up-regulated protein 29 (meu29) from Schizosaccharomyces pombe (strain 972 / ATCC 24843) (Fission yeast).